A 429-amino-acid polypeptide reads, in one-letter code: Phosphoribosylamine--glycine ligase (429 aa).

Residues 109-316 enclose the ATP-grasp domain; it reads KDFLARHQIP…LVDLCLAACD (208 aa). ATP is bound at residue 135-196; sequence LREKGAPIVI…EEFLDGEEAS (62 aa). Mg(2+) is bound by residues Glu-286 and Asn-288.

This sequence belongs to the GARS family. As to quaternary structure, monomer. Mg(2+) is required as a cofactor. It depends on Mn(2+) as a cofactor.

The catalysed reaction is 5-phospho-beta-D-ribosylamine + glycine + ATP = N(1)-(5-phospho-beta-D-ribosyl)glycinamide + ADP + phosphate + H(+). It participates in purine metabolism; IMP biosynthesis via de novo pathway; N(1)-(5-phospho-D-ribosyl)glycinamide from 5-phospho-alpha-D-ribose 1-diphosphate: step 2/2. This Salmonella typhi protein is Phosphoribosylamine--glycine ligase.